Here is a 358-residue protein sequence, read N- to C-terminus: WD repeat-containing protein 53 (358 aa).

6 WD repeats span residues 1 to 38 (MAVK…AWGE), 43 to 80 (LGHT…VLDV), 85 to 123 (DSLD…ILDL), 127 to 166 (KVIR…LWSL), 173 to 225 (WITN…RIFR), and 232 to 270 (EQEL…LWDA). Residues 273–311 (EVEKKQKSPTKRTHRKKPKRGTCTKQGGNTNASVTDEEE) are disordered. The span at 279–294 (KSPTKRTHRKKPKRGT) shows a compositional bias: basic residues. Positions 295–306 (CTKQGGNTNASV) are enriched in polar residues. The stretch at 314-355 (NILPKLNIEHGEKVNWLLGTKIKGHQNILVADQTSCISVYPL) is one WD 7 repeat.

This sequence belongs to the WD repeat WDR53 family.

This is WD repeat-containing protein 53 (WDR53) from Homo sapiens (Human).